A 153-amino-acid chain; its full sequence is MTDTRNLTQLGSKTQAPASPEAATLETAPFSRGDGPAAIVRFTCPEFTSLCPVTGQPDFAHIVIDYAPDKLLVESKSLKLFLTSFRNHGAFHEDCTVMIGRRIVEATKPLWLRIGGYWYPRGGIPIDVFWQTGTPPKDAWVPETGVPPYRGRG.

Residues 1-17 show a composition bias toward polar residues; that stretch reads MTDTRNLTQLGSKTQAP. The interval 1-23 is disordered; the sequence is MTDTRNLTQLGSKTQAPASPEAA. C51 functions as the Thioimide intermediate in the catalytic mechanism. The active-site Proton donor is D58. Residues 73-75 and 92-93 each bind substrate; these read VES and HE.

It belongs to the GTP cyclohydrolase I family. QueF type 1 subfamily.

It is found in the cytoplasm. It catalyses the reaction 7-aminomethyl-7-carbaguanine + 2 NADP(+) = 7-cyano-7-deazaguanine + 2 NADPH + 3 H(+). It functions in the pathway tRNA modification; tRNA-queuosine biosynthesis. In terms of biological role, catalyzes the NADPH-dependent reduction of 7-cyano-7-deazaguanine (preQ0) to 7-aminomethyl-7-deazaguanine (preQ1). The polypeptide is NADPH-dependent 7-cyano-7-deazaguanine reductase (Chelativorans sp. (strain BNC1)).